A 210-amino-acid chain; its full sequence is Large ribosomal subunit protein uL3 (210 aa).

A disordered region spans residues 125–151 (RHGQSRGPMSHGSRYHRRPGSMGPVAP).

Belongs to the universal ribosomal protein uL3 family. Part of the 50S ribosomal subunit. Forms a cluster with proteins L14 and L19.

In terms of biological role, one of the primary rRNA binding proteins, it binds directly near the 3'-end of the 23S rRNA, where it nucleates assembly of the 50S subunit. The sequence is that of Large ribosomal subunit protein uL3 from Bacillus cereus (strain Q1).